The following is a 463-amino-acid chain: ATP-dependent protease ATPase subunit HslU (463 aa).

ATP-binding positions include Val-21, 63–68 (GVGKTE), Asp-276, Glu-341, and Arg-413.

It belongs to the ClpX chaperone family. HslU subfamily. As to quaternary structure, a double ring-shaped homohexamer of HslV is capped on each side by a ring-shaped HslU homohexamer. The assembly of the HslU/HslV complex is dependent on binding of ATP.

The protein resides in the cytoplasm. Its function is as follows. ATPase subunit of a proteasome-like degradation complex; this subunit has chaperone activity. The binding of ATP and its subsequent hydrolysis by HslU are essential for unfolding of protein substrates subsequently hydrolyzed by HslV. HslU recognizes the N-terminal part of its protein substrates and unfolds these before they are guided to HslV for hydrolysis. This chain is ATP-dependent protease ATPase subunit HslU, found in Thermotoga petrophila (strain ATCC BAA-488 / DSM 13995 / JCM 10881 / RKU-1).